A 983-amino-acid polypeptide reads, in one-letter code: 26S proteasome regulatory subunit RPN1 (983 aa).

Basic and acidic residues predominate over residues 1-26; the sequence is MSTDKKKEEVPKPETEDLTVKDETKN. 2 disordered regions span residues 1–44 and 169–188; these read MSTD…EDQK and VEKE…QPPH. 5 PC repeats span residues 415–447, 448–484, 485–519, 520–557, and 563–595; these read SAVA…EVKA, GGLL…KIST, AAIL…SLEL, AAIA…ELKS, and LALS…MTSA. Disordered regions lie at residues 625 to 644 and 662 to 724; these read AVKS…SQED and EPQG…GAND. Positions 630–642 are enriched in acidic residues; sequence DEDEDEDNEELSQ. The segment covering 688-705 has biased composition (basic and acidic residues); that stretch reads NVKKEENEEEKTEKSEKT. A compositionally biased stretch (acidic residues) spans 706–718; sequence ENDEEEEDEEESK. PC repeat units lie at residues 768-799 and 800-834; these read LAMG…DVSM and NSIF…EQDA.

It belongs to the proteasome subunit S2 family.

In terms of biological role, acts as a regulatory subunit of the 26 proteasome which is involved in the ATP-dependent degradation of ubiquitinated proteins. This is 26S proteasome regulatory subunit RPN1 (RPN1) from Candida glabrata (strain ATCC 2001 / BCRC 20586 / JCM 3761 / NBRC 0622 / NRRL Y-65 / CBS 138) (Yeast).